The sequence spans 368 residues: Phospho-N-acetylmuramoyl-pentapeptide-transferase (368 aa).

A run of 9 helical transmembrane segments spans residues 50–70, 95–115, 117–137, 156–176, 183–203, 218–238, 242–262, 284–304, and 347–367; these read LLAL…VVPL, PTMG…ILAG, SPLV…GWLD, LCLQ…QQGW, ITLP…LAVF, LDGL…LWLA, PAIA…LLHN, AIAI…LFVL, and TQVV…CWLL.

This sequence belongs to the glycosyltransferase 4 family. MraY subfamily. The cofactor is Mg(2+).

It localises to the cell inner membrane. It carries out the reaction UDP-N-acetyl-alpha-D-muramoyl-L-alanyl-gamma-D-glutamyl-meso-2,6-diaminopimeloyl-D-alanyl-D-alanine + di-trans,octa-cis-undecaprenyl phosphate = di-trans,octa-cis-undecaprenyl diphospho-N-acetyl-alpha-D-muramoyl-L-alanyl-D-glutamyl-meso-2,6-diaminopimeloyl-D-alanyl-D-alanine + UMP. Its pathway is cell wall biogenesis; peptidoglycan biosynthesis. In terms of biological role, catalyzes the initial step of the lipid cycle reactions in the biosynthesis of the cell wall peptidoglycan: transfers peptidoglycan precursor phospho-MurNAc-pentapeptide from UDP-MurNAc-pentapeptide onto the lipid carrier undecaprenyl phosphate, yielding undecaprenyl-pyrophosphoryl-MurNAc-pentapeptide, known as lipid I. The protein is Phospho-N-acetylmuramoyl-pentapeptide-transferase of Synechococcus sp. (strain ATCC 27144 / PCC 6301 / SAUG 1402/1) (Anacystis nidulans).